We begin with the raw amino-acid sequence, 361 residues long: Phospho-N-acetylmuramoyl-pentapeptide-transferase (361 aa).

10 helical membrane-spanning segments follow: residues 25-45, 73-93, 97-117, 134-154, 168-188, 200-220, 237-257, 264-284, 289-309, and 338-358; these read RTVLAALTALIISFIVGPAMI, TMGGALILVSIAITTLLWADL, YVWIVLITTLGFGMIGWVDDY, LFWQSAIAILVALYLVLTAEL, VAVPLGVTGFVALTYFVIVGT, GLAIMPTVMISSALAIFSYVA, AGELAVFCGALAGAGLAFLWF, VFMGDVGALALGAALGIVTVI, IVMLIMGGVFVVETLSVMLQV, and QVVVRFWIITMMLVLFGLSSL.

It belongs to the glycosyltransferase 4 family. MraY subfamily. The cofactor is Mg(2+).

The protein localises to the cell inner membrane. It carries out the reaction UDP-N-acetyl-alpha-D-muramoyl-L-alanyl-gamma-D-glutamyl-meso-2,6-diaminopimeloyl-D-alanyl-D-alanine + di-trans,octa-cis-undecaprenyl phosphate = di-trans,octa-cis-undecaprenyl diphospho-N-acetyl-alpha-D-muramoyl-L-alanyl-D-glutamyl-meso-2,6-diaminopimeloyl-D-alanyl-D-alanine + UMP. Its pathway is cell wall biogenesis; peptidoglycan biosynthesis. Catalyzes the initial step of the lipid cycle reactions in the biosynthesis of the cell wall peptidoglycan: transfers peptidoglycan precursor phospho-MurNAc-pentapeptide from UDP-MurNAc-pentapeptide onto the lipid carrier undecaprenyl phosphate, yielding undecaprenyl-pyrophosphoryl-MurNAc-pentapeptide, known as lipid I. The chain is Phospho-N-acetylmuramoyl-pentapeptide-transferase from Nitrosospira multiformis (strain ATCC 25196 / NCIMB 11849 / C 71).